Here is a 141-residue protein sequence, read N- to C-terminus: Hemoglobin subunit alpha (141 aa).

The 141-residue stretch at 1–141 (VLSAADKAHV…VSTVLTSKYR (141 aa)) folds into the Globin domain. Ser3 is subject to Phosphoserine. Residues Lys7 and Lys11 each carry the N6-succinyllysine modification. N6-acetyllysine; alternate is present on Lys16. Position 16 is an N6-succinyllysine; alternate (Lys16). A Phosphotyrosine modification is found at Tyr24. Position 35 is a phosphoserine (Ser35). Lys40 carries the N6-succinyllysine modification. Ser49 carries the post-translational modification Phosphoserine. His58 is an O2 binding site. His87 serves as a coordination point for heme b. Thr108 is modified (phosphothreonine). Ser124 is subject to Phosphoserine. A phosphothreonine mark is found at Thr134 and Thr137. Ser138 bears the Phosphoserine mark.

The protein belongs to the globin family. Heterotetramer of two alpha chains and two beta chains. As to expression, red blood cells.

Involved in oxygen transport from the lung to the various peripheral tissues. Its function is as follows. Hemopressin acts as an antagonist peptide of the cannabinoid receptor CNR1. Hemopressin-binding efficiently blocks cannabinoid receptor CNR1 and subsequent signaling. The sequence is that of Hemoglobin subunit alpha (HBA) from Bradypus tridactylus (Pale-throated three-toed sloth).